The following is a 778-amino-acid chain: Endonuclease MutS2 (778 aa).

Gly328–Thr335 provides a ligand contact to ATP. A Smr domain is found at Leu702–Lys777.

The protein belongs to the DNA mismatch repair MutS family. MutS2 subfamily. Homodimer. Binds to stalled ribosomes, contacting rRNA.

Endonuclease that is involved in the suppression of homologous recombination and thus may have a key role in the control of bacterial genetic diversity. Its function is as follows. Acts as a ribosome collision sensor, splitting the ribosome into its 2 subunits. Detects stalled/collided 70S ribosomes which it binds and splits by an ATP-hydrolysis driven conformational change. Acts upstream of the ribosome quality control system (RQC), a ribosome-associated complex that mediates the extraction of incompletely synthesized nascent chains from stalled ribosomes and their subsequent degradation. Probably generates substrates for RQC. In Streptococcus pneumoniae (strain 70585), this protein is Endonuclease MutS2.